A 65-amino-acid polypeptide reads, in one-letter code: Beta-defensin 41 (65 aa).

The signal sequence occupies residues 1–19; it reads MKFHLFFFILLFGATILTA. Disulfide bonds link Cys35-Cys63, Cys42-Cys56, and Cys46-Cys64.

Belongs to the beta-defensin family. As to expression, isoform 2 is epididymis-specific and expressed mainly in the proximal caput.

It localises to the secreted. In terms of biological role, has bactericidal activity. Isoform 2 may play a role in the antimicrobial protection of sperm and urogenital tract epithelia. This chain is Beta-defensin 41, found in Mus musculus (Mouse).